The sequence spans 37 residues: Large ribosomal subunit protein bL36 (37 aa).

It belongs to the bacterial ribosomal protein bL36 family.

The protein is Large ribosomal subunit protein bL36 of Metamycoplasma arthritidis (strain 158L3-1) (Mycoplasma arthritidis).